A 28-amino-acid polypeptide reads, in one-letter code: GKCGDINAPCKAECDCCGYTTCDCYWGN.

Disulfide bonds link Cys-3–Cys-17 and Cys-10–Cys-22.

As to expression, expressed by the venom gland.

It is found in the secreted. Insecticidal neurotoxin that reversibly inhibits the N-methyl-D-aspartate (NMDA)-subtype of ionotropic glutamate receptor (GRIN) and inhibits inactivation of insect sodium channels (Nav). In vivo, is highly toxic to insects. The chain is U15-ctenitoxin-Co1a from Ctenus ornatus (Brazilian spider).